We begin with the raw amino-acid sequence, 204 residues long: Large ribosomal subunit protein eL15 (204 aa).

A disordered region spans residues 185–204 (GGSRRAAWKRKNREHMHRKR). A compositionally biased stretch (basic residues) spans 190–204 (AAWKRKNREHMHRKR).

Belongs to the eukaryotic ribosomal protein eL15 family.

The protein is Large ribosomal subunit protein eL15 (RpL15) of Drosophila melanogaster (Fruit fly).